The sequence spans 223 residues: Dephospho-CoA kinase (223 aa).

A DPCK domain is found at 22–223 (LIGLSGPSCS…LLQEVKKRGF (202 aa)). ATP is bound at residue 30–35 (CSGKNT).

It belongs to the CoaE family.

It is found in the cytoplasm. The enzyme catalyses 3'-dephospho-CoA + ATP = ADP + CoA + H(+). Its pathway is cofactor biosynthesis; coenzyme A biosynthesis; CoA from (R)-pantothenate: step 5/5. Functionally, catalyzes the phosphorylation of the 3'-hydroxyl group of dephosphocoenzyme A to form coenzyme A. The sequence is that of Dephospho-CoA kinase from Treponema denticola (strain ATCC 35405 / DSM 14222 / CIP 103919 / JCM 8153 / KCTC 15104).